The sequence spans 334 residues: Beta-hexosaminidase (334 aa).

Residues Asp-57, Arg-65, Arg-128, and 158 to 159 contribute to the substrate site; that span reads KH. His-171 (proton donor/acceptor) is an active-site residue. Asp-242 functions as the Nucleophile in the catalytic mechanism.

It belongs to the glycosyl hydrolase 3 family. NagZ subfamily.

The protein localises to the cytoplasm. The catalysed reaction is Hydrolysis of terminal non-reducing N-acetyl-D-hexosamine residues in N-acetyl-beta-D-hexosaminides.. It functions in the pathway cell wall biogenesis; peptidoglycan recycling. Its function is as follows. Plays a role in peptidoglycan recycling by cleaving the terminal beta-1,4-linked N-acetylglucosamine (GlcNAc) from peptide-linked peptidoglycan fragments, giving rise to free GlcNAc, anhydro-N-acetylmuramic acid and anhydro-N-acetylmuramic acid-linked peptides. This chain is Beta-hexosaminidase, found in Methylococcus capsulatus (strain ATCC 33009 / NCIMB 11132 / Bath).